A 215-amino-acid chain; its full sequence is Adenylate kinase (215 aa).

10–15 (GAGKGT) contributes to the ATP binding site. The interval 30-59 (STGDMLRAAVKAETELGLKAKSVMDSGGLV) is NMP. AMP is bound by residues Thr31, Arg36, 57–59 (GLV), 85–88 (GFPR), and Gln92. The LID stretch occupies residues 122–159 (GRRVHEGSGRIYHTIFNPPKVEGIDDVTGEPLLQRKDD). Residues Arg123 and 132-133 (IY) contribute to the ATP site. AMP is bound by residues Arg156 and Arg167. ATP is bound at residue Gly201.

This sequence belongs to the adenylate kinase family. Monomer.

The protein resides in the cytoplasm. The enzyme catalyses AMP + ATP = 2 ADP. It participates in purine metabolism; AMP biosynthesis via salvage pathway; AMP from ADP: step 1/1. Catalyzes the reversible transfer of the terminal phosphate group between ATP and AMP. Plays an important role in cellular energy homeostasis and in adenine nucleotide metabolism. This is Adenylate kinase from Pseudomonas syringae pv. syringae (strain B728a).